Here is a 448-residue protein sequence, read N- to C-terminus: Tryptophan dimethylallyltransferase 2 (448 aa).

L-tryptophan contacts are provided by residues Ile80–Leu81 and Glu89. Arg100, Lys186, and Tyr188 together coordinate substrate. The L-tryptophan site is built by Tyr190 and Arg249. Substrate contacts are provided by Arg262, Lys264, Tyr266, Gln348, Tyr350, Tyr414, and Tyr418.

This sequence belongs to the tryptophan dimethylallyltransferase family. In terms of assembly, homodimer.

The enzyme catalyses L-tryptophan + dimethylallyl diphosphate = 4-(3-methylbut-2-enyl)-L-tryptophan + diphosphate. It functions in the pathway alkaloid biosynthesis; ergot alkaloid biosynthesis. Functionally, catalyzes the first step of ergot alkaloid biosynthesis. Ergot alkaloids, which are produced by endophyte fungi, can enhance plant host fitness, but also cause livestock toxicosis to host plants. This chain is Tryptophan dimethylallyltransferase 2 (dmaW2), found in Claviceps purpurea (strain 20.1) (Ergot fungus).